The primary structure comprises 482 residues: ATP synthase subunit beta (482 aa).

162–169 provides a ligand contact to ATP; sequence GGAGVGKT.

The protein belongs to the ATPase alpha/beta chains family. In terms of assembly, F-type ATPases have 2 components, CF(1) - the catalytic core - and CF(0) - the membrane proton channel. CF(1) has five subunits: alpha(3), beta(3), gamma(1), delta(1), epsilon(1). CF(0) has four main subunits: a(1), b(1), b'(1) and c(9-12).

It localises to the cellular thylakoid membrane. The catalysed reaction is ATP + H2O + 4 H(+)(in) = ADP + phosphate + 5 H(+)(out). Functionally, produces ATP from ADP in the presence of a proton gradient across the membrane. The catalytic sites are hosted primarily by the beta subunits. This chain is ATP synthase subunit beta, found in Nostoc sp. (strain PCC 7120 / SAG 25.82 / UTEX 2576).